A 282-amino-acid chain; its full sequence is Light-independent protochlorophyllide reductase iron-sulfur ATP-binding protein (282 aa).

ATP contacts are provided by residues 10-15 and Lys39; that span reads GIGKST. Mg(2+) is bound at residue Ser14. 2 residues coordinate [4Fe-4S] cluster: Cys95 and Cys129. ATP is bound at residue 180–181; sequence NR.

It belongs to the NifH/BchL/ChlL family. As to quaternary structure, homodimer. Protochlorophyllide reductase is composed of three subunits; ChlL, ChlN and ChlB. [4Fe-4S] cluster is required as a cofactor.

Its subcellular location is the plastid. The protein resides in the cyanelle. The enzyme catalyses chlorophyllide a + oxidized 2[4Fe-4S]-[ferredoxin] + 2 ADP + 2 phosphate = protochlorophyllide a + reduced 2[4Fe-4S]-[ferredoxin] + 2 ATP + 2 H2O. It functions in the pathway porphyrin-containing compound metabolism; chlorophyll biosynthesis (light-independent). Component of the dark-operative protochlorophyllide reductase (DPOR) that uses Mg-ATP and reduced ferredoxin to reduce ring D of protochlorophyllide (Pchlide) to form chlorophyllide a (Chlide). This reaction is light-independent. The L component serves as a unique electron donor to the NB-component of the complex, and binds Mg-ATP. The polypeptide is Light-independent protochlorophyllide reductase iron-sulfur ATP-binding protein (Cyanophora paradoxa).